A 970-amino-acid polypeptide reads, in one-letter code: Sodium/calcium exchanger 1 (970 aa).

The signal sequence occupies residues 1 to 32 (MLRLRLSPTFSVGFHLLAFVPLLFSHVDLISA). Residues 33–71 (DTEMEGEGNETGECTGSYYCKKGVILPIWEPQDPSFGDK) are Extracellular-facing. Asn-41 carries an N-linked (GlcNAc...) asparagine glycan. Residues 72–92 (IARATVYFVAMVYMFLGVSII) form a helical membrane-spanning segment. The Cytoplasmic portion of the chain corresponds to 93–133 (ADRFMSSIEVITSQEKEITIKKPNGETTKTTVRIWNETVSN). A helical membrane pass occupies residues 134–154 (LTLMALGSSAPEILLSVIEVC). Residues 138–178 (ALGSSAPEILLSVIEVCGHNFTAGDLGPSTIVGSAAFNMFI) form an Alpha-1 repeat. Residues 155 to 167 (GHNFTAGDLGPST) lie on the Extracellular side of the membrane. An N-linked (GlcNAc...) asparagine glycan is attached at Asn-157. Residues 168–188 (IVGSAAFNMFIIIALCVYVVP) traverse the membrane as a helical segment. Residues 189-201 (DGETRKIKHLRVF) lie on the Cytoplasmic side of the membrane. The chain crosses the membrane as a helical span at residues 202 to 222 (FVTAAWSIFAYTWLYIILSVI). The Extracellular portion of the chain corresponds to 223-228 (SPGVVE). The chain crosses the membrane as a helical span at residues 229-249 (VWEGLLTFFFFPICVVFAWVA). Residues 250–797 (DRRLLFYKYV…FVPPTEYWNG (548 aa)) are Cytoplasmic-facing. The tract at residues 251-270 (RRLLFYKYVYKRYRAGKQRG) is putative calmodulin-binding region. Phosphoserine occurs at positions 282 and 389. Calx-beta domains lie at 393-493 (VNTE…VHLS) and 524-624 (ATVT…LEIG). Glu-417, Asp-453, Asp-478, Asp-479, Ile-481, Glu-483, Glu-486, Asp-530, Asp-531, Asp-532, Glu-548, Asp-584, Asp-610, Glu-611, Glu-612, and Glu-715 together coordinate Ca(2+). The chain crosses the membrane as a helical span at residues 798 to 818 (WACFIVSILMIGILTAFIGDL). The Extracellular segment spans residues 819 to 821 (ASH). The helical transmembrane segment at 822–842 (FGCTIGLKDSVTAVVFVALGT) threads the bilayer. One copy of the Alpha-2 repeat lies at 839–875 (ALGTSVPDTFASKVAATQDQYADASIGNVTGSNAVNV). Over 843 to 871 (SVPDTFASKVAATQDQYADASIGNVTGSN) the chain is Cytoplasmic. Residues 872 to 892 (AVNVFLGIGVAWSIAAIYHAA) form a helical membrane-spanning segment. Residues 893–903 (NGEQFKVSPGT) are Extracellular-facing. A helical membrane pass occupies residues 904 to 924 (LAFSVTLFTIFAFINVGVLLY). Residues 925 to 941 (RRRPEIGGELGGPRTAK) are Cytoplasmic-facing. The helical transmembrane segment at 942–962 (LLTSCLFVLLWLLYIFFSSLE) threads the bilayer. The Extracellular segment spans residues 963–970 (AYCHIKGF).

It belongs to the Ca(2+):cation antiporter (CaCA) (TC 2.A.19) family. SLC8 subfamily. As to expression, detected in heart (at protein level). Detected in heart.

Its subcellular location is the cell membrane. It carries out the reaction Ca(2+)(in) + 3 Na(+)(out) = Ca(2+)(out) + 3 Na(+)(in). With respect to regulation, activated by micromolar levels of Ca(2+). Mediates the exchange of one Ca(2+) ion against three to four Na(+) ions across the cell membrane, and thereby contributes to the regulation of cytoplasmic Ca(2+) levels and Ca(2+)-dependent cellular processes. Contributes to Ca(2+) transport during excitation-contraction coupling in muscle. In a first phase, voltage-gated channels mediate the rapid increase of cytoplasmic Ca(2+) levels due to release of Ca(2+) stores from the endoplasmic reticulum. SLC8A1 mediates the export of Ca(2+) from the cell during the next phase, so that cytoplasmic Ca(2+) levels rapidly return to baseline. Required for normal embryonic heart development and the onset of heart contractions. The polypeptide is Sodium/calcium exchanger 1 (SLC8A1) (Felis catus (Cat)).